The primary structure comprises 1277 residues: NPC intracellular cholesterol transporter 1 (1277 aa).

The N-terminal stretch at 1-22 (MGAHHPALGLLLLLLCPAQVFS) is a signal peptide. Over 23 to 269 (QSCVWYGECG…WRIWGLDAMY (247 aa)) the chain is Lumenal. 9 disulfides stabilise this stretch: Cys25/Cys74, Cys31/Cys42, Cys63/Cys109, Cys75/Cys113, Cys97/Cys238, Cys100/Cys160, Cys177/Cys184, Cys227/Cys243, and Cys240/Cys247. Asn41 lines the cholesterol pocket. An N-linked (GlcNAc...) asparagine glycan is attached at Asn70. Gln79 lines the cholesterol pocket. 2 N-linked (GlcNAc...) asparagine glycosylation sites follow: Asn122 and Asn137. An important for cholesterol binding and cholesterol transfer from NPC1 to liposomes region spans residues 175–205 (LLCGRDARACNATNWIEYMFNKDNGQAPFTI). Asn185, Asn222, and Asn228 each carry an N-linked (GlcNAc...) asparagine glycan. Residues 270 to 290 (VIMWVTYVAFLFVFFGALLAV) form a helical membrane-spanning segment. At 291 to 350 (WCHRRRYFVSEYTPIDSNIAFSVNSSDKGEASCCDPLGAAFDDCLRRMFTKWGAFCVRNP) the chain is on the cytoplasmic side. Residues 351–371 (TCIIFFSLAFITVCSSGLVFV) form a helical membrane-spanning segment. Topologically, residues 372-621 (QVTTNPVELW…ELNRESNSDV (250 aa)) are lumenal. Residues Asn414, Asn459, Asn478, and Asn524 are each glycosylated (N-linked (GlcNAc...) asparagine). 2 cysteine pairs are disulfide-bonded: Cys468–Cys479 and Cys516–Cys533. The 166-residue stretch at 620-785 (DVFTVIISYV…ITCFVSLLGL (166 aa)) folds into the SSD domain. The chain crosses the membrane as a helical span at residues 622–642 (FTVIISYVVMFLYISLALGHI). Topologically, residues 643–653 (QSCSRLLVDSK) are cytoplasmic. The chain crosses the membrane as a helical span at residues 654–674 (ISLGIAGILIVLSSVACSLGI). Residues 675-683 (FSYMGMPLT) are Lumenal-facing. Residues 684 to 704 (LIVIEVIPFLVLAVGVDNIFI) form a helical membrane-spanning segment. Topologically, residues 705–730 (LVQTYQRDERLQEETLDQQLGRILGE) are cytoplasmic. A helical membrane pass occupies residues 731-751 (VAPTMFLSSFSETSAFFFGAL). Over 752–759 (SSMPAVHT) the chain is Lumenal. The helical transmembrane segment at 760–780 (FSLFAGMAVLIDFLLQITCFV) threads the bilayer. The Cytoplasmic portion of the chain corresponds to 781–832 (SLLGLDIKRQEKNHLDILCCVRGADDGQGSHASESYLFRFFKNYFAPLLLKD). Residues 833–853 (WLRPIVVAVFVGVLSFSVAVV) traverse the membrane as a helical segment. Over 854–1097 (NKVDIGLDQS…EQYLTIIDDT (244 aa)) the chain is Lumenal. Asn868 and Asn898 each carry an N-linked (GlcNAc...) asparagine glycan. Cys909 and Cys914 are disulfide-bonded. Asn916, Asn961, Asn968, and Asn1063 each carry an N-linked (GlcNAc...) asparagine glycan. 3 disulfides stabilise this stretch: Cys956-Cys1011, Cys957-Cys979, and Cys967-Cys976. A helical transmembrane segment spans residues 1098–1118 (IFNLSVSLGSIFLVTLVVLGC). The Cytoplasmic segment spans residues 1119–1123 (ELWSA). The helical transmembrane segment at 1124 to 1144 (VIMCITIAMILVNMFGVMWLW) threads the bilayer. A topological domain (lumenal) is located at residue Gly1145. Residues 1146-1166 (ISLNAVSLVNLVMSCGISVEF) form a helical membrane-spanning segment. At 1167–1194 (CSHITRAFTMSTKGSRVSRAEEALAHMG) the chain is on the cytoplasmic side. A helical membrane pass occupies residues 1195-1215 (SSVFSGITLTKFGGIVVLAFA). Residues 1216-1226 (KSQIFEIFYFR) lie on the Lumenal side of the membrane. Residues 1227–1247 (MYLAMVLLGATHGLIFLPVLL) traverse the membrane as a helical segment. The Cytoplasmic segment spans residues 1248–1277 (SYIGPSVNKAKRHTTYERYRGTERERLLNF). Residues 1274–1277 (LLNF) are required for location in lysosomes. The Di-leucine motif signature appears at 1274-1277 (LLNF).

Belongs to the patched family. As to quaternary structure, interacts (via the second lumenal domain) with NPC2. Interacts with TMEM97; the interaction may decrease NPC1 availability to the cell. Interacts with TIM1. Interacts with SLC38A9; this interaction inhibits cholesterol-mediated mTORC1 activation via its sterol transport activity. N-glycosylated. In terms of tissue distribution, detected in liver (at protein level). Ubiquitous. Detected in adult heart, spleen, lung, liver, skeletal muscle, kidney, testis.

The protein resides in the late endosome membrane. The protein localises to the lysosome membrane. The enzyme catalyses cholesterol(in) = cholesterol(out). Functionally, intracellular cholesterol transporter which acts in concert with NPC2 and plays an important role in the egress of cholesterol from the endosomal/lysosomal compartment. Unesterified cholesterol that has been released from LDLs in the lumen of the late endosomes/lysosomes is transferred by NPC2 to the cholesterol-binding pocket in the N-terminal domain of NPC1. Cholesterol binds to NPC1 with the hydroxyl group buried in the binding pocket. May play a role in vesicular trafficking in glia, a process that may be crucial for maintaining the structural and functional integrity of nerve terminals. Inhibits cholesterol-mediated mTORC1 activation throught its interaction with SLC38A9. The polypeptide is NPC intracellular cholesterol transporter 1 (Mus musculus (Mouse)).